Consider the following 251-residue polypeptide: Homeobox protein notochord (251 aa).

Pro residues predominate over residues 1–14 (MPSPRPRGSPPPAP). The tract at residues 1 to 47 (MPSPRPRGSPPPAPSGSRVRPPRSGRSPAPRSPTGPNTPRAPGRFES) is disordered. Positions 15-35 (SGSRVRPPRSGRSPAPRSPTG) are enriched in low complexity. The homeobox DNA-binding region spans 156–215 (QKRVRTMFNLEQLEELEKVFAKQHNLVGKKRAQLAARLKLTENQVRVWFQNRRVKYQKQQ). Positions 224 to 242 (AEAASLDEPSSSSIASIQS) are enriched in low complexity. Residues 224-251 (AEAASLDEPSSSSIASIQSDDAESGVDG) are disordered.

It localises to the nucleus. Transcription regulator acting downstream of both FOXA2 and Brachyury (T) during notochord development. Required for node morphogenesis. Is essential for cilia formation in the posterior notochord (PNC) and for left-right patterning; acts upstream of FOXJ1 and RFX3 in this process and is required for the expression of various components important for axonemal assembly and function. Plays a role in regulating axial versus paraxial cell fate. Activates the transcription of ciliary proteins C11orf97 homolog, FAM183B and SPACA9 in the embryonic ventral node. In Homo sapiens (Human), this protein is Homeobox protein notochord (NOTO).